Reading from the N-terminus, the 257-residue chain is UPF0246 protein Mmc1_3117 (257 aa).

It belongs to the UPF0246 family.

The polypeptide is UPF0246 protein Mmc1_3117 (Magnetococcus marinus (strain ATCC BAA-1437 / JCM 17883 / MC-1)).